The primary structure comprises 328 residues: Phosphate acetyltransferase (328 aa).

This sequence belongs to the phosphate acetyltransferase and butyryltransferase family.

The protein localises to the cytoplasm. The enzyme catalyses acetyl-CoA + phosphate = acetyl phosphate + CoA. It participates in metabolic intermediate biosynthesis; acetyl-CoA biosynthesis; acetyl-CoA from acetate: step 2/2. The sequence is that of Phosphate acetyltransferase (pta) from Staphylococcus aureus (strain COL).